The sequence spans 124 residues: Fluoride-specific ion channel FluC 2 (124 aa).

4 consecutive transmembrane segments (helical) span residues 9-29, 34-54, 67-87, and 99-119; these read LGIF…STWL, DFPW…IFLV, LILA…SLML, and FSLV…AYFL. 2 residues coordinate Na(+): Gly-77 and Thr-80.

This sequence belongs to the fluoride channel Fluc/FEX (TC 1.A.43) family.

It localises to the cell membrane. The catalysed reaction is fluoride(in) = fluoride(out). Na(+) is not transported, but it plays an essential structural role and its presence is essential for fluoride channel function. In terms of biological role, fluoride-specific ion channel. Important for reducing fluoride concentration in the cell, thus reducing its toxicity. This chain is Fluoride-specific ion channel FluC 2, found in Streptococcus pneumoniae (strain ATCC BAA-255 / R6).